The primary structure comprises 519 residues: Cytochrome P450 52E1 (519 aa).

Helical transmembrane passes span 10-30 (ALGG…FYFI) and 44-64 (VIVF…TAML). Cysteine 479 lines the heme pocket.

It belongs to the cytochrome P450 family. Heme serves as cofactor.

Its subcellular location is the membrane. Functionally, together with an NADPH cytochrome P450 the enzyme system catalyzes the terminal hydroxylation as the first step in the assimilation of alkanes and fatty acids. The polypeptide is Cytochrome P450 52E1 (CYP52E1) (Candida apicola (Yeast)).